The primary structure comprises 790 residues: Penicillin-binding protein 1A (790 aa).

Over 1–6 (MYKSLL) the chain is Cytoplasmic. A helical; Signal-anchor for type II membrane protein transmembrane segment spans residues 7 to 27 (FCLKIFVFLILVGCGITAYII). Residues 28–790 (YHYSRDLPDY…SKEDQSQEIY (763 aa)) are Periplasmic-facing. Positions 49–220 (TRIYSRDGKL…SELNPERNYA (172 aa)) are transglycosylase. Residue Glu87 is the Proton donor; for transglycosylase activity of the active site. The tract at residues 398–711 (DVIVVEAIKE…SNVVLPIFID (314 aa)) is transpeptidase. Ser457 (acyl-ester intermediate; for transpeptidase activity) is an active-site residue.

The protein in the N-terminal section; belongs to the glycosyltransferase 51 family. In the C-terminal section; belongs to the transpeptidase family.

It is found in the cell inner membrane. The enzyme catalyses [GlcNAc-(1-&gt;4)-Mur2Ac(oyl-L-Ala-gamma-D-Glu-L-Lys-D-Ala-D-Ala)](n)-di-trans,octa-cis-undecaprenyl diphosphate + beta-D-GlcNAc-(1-&gt;4)-Mur2Ac(oyl-L-Ala-gamma-D-Glu-L-Lys-D-Ala-D-Ala)-di-trans,octa-cis-undecaprenyl diphosphate = [GlcNAc-(1-&gt;4)-Mur2Ac(oyl-L-Ala-gamma-D-Glu-L-Lys-D-Ala-D-Ala)](n+1)-di-trans,octa-cis-undecaprenyl diphosphate + di-trans,octa-cis-undecaprenyl diphosphate + H(+). The catalysed reaction is Preferential cleavage: (Ac)2-L-Lys-D-Ala-|-D-Ala. Also transpeptidation of peptidyl-alanyl moieties that are N-acyl substituents of D-alanine.. It functions in the pathway cell wall biogenesis; peptidoglycan biosynthesis. In terms of biological role, cell wall formation. Synthesis of cross-linked peptidoglycan from the lipid intermediates. The enzyme has a penicillin-insensitive transglycosylase N-terminal domain (formation of linear glycan strands) and a penicillin-sensitive transpeptidase C-terminal domain (cross-linking of the peptide subunits). The protein is Penicillin-binding protein 1A (mrcA) of Rickettsia conorii (strain ATCC VR-613 / Malish 7).